A 126-amino-acid chain; its full sequence is Glycine cleavage system H protein (126 aa).

Positions Thr21 to Lys103 constitute a Lipoyl-binding domain. Lys62 bears the N6-lipoyllysine mark.

It belongs to the GcvH family. In terms of assembly, the glycine cleavage system is composed of four proteins: P, T, L and H. Requires (R)-lipoate as cofactor.

In terms of biological role, the glycine cleavage system catalyzes the degradation of glycine. The H protein shuttles the methylamine group of glycine from the P protein to the T protein. This chain is Glycine cleavage system H protein, found in Aliivibrio fischeri (strain MJ11) (Vibrio fischeri).